A 500-amino-acid polypeptide reads, in one-letter code: Galactose/methyl galactoside import ATP-binding protein MglA (500 aa).

ABC transporter domains are found at residues 8 to 243 and 257 to 500; these read LEME…VGRD and EMIL…AKYL. 40-47 serves as a coordination point for ATP; sequence GENGAGKS.

This sequence belongs to the ABC transporter superfamily. Galactose/methyl galactoside importer (TC 3.A.1.2.3) family. In terms of assembly, the complex is composed of one ATP-binding protein (MglA), two transmembrane proteins (MglC) and a solute-binding protein (MglB).

It is found in the cell inner membrane. It carries out the reaction D-galactose(out) + ATP + H2O = D-galactose(in) + ADP + phosphate + H(+). It catalyses the reaction methyl beta-D-galactoside(out) + ATP + H2O = methyl beta-D-galactoside(in) + ADP + phosphate + H(+). Functionally, part of the ABC transporter complex MglABC involved in galactose/methyl galactoside import. Responsible for energy coupling to the transport system. This Fusobacterium nucleatum subsp. nucleatum (strain ATCC 25586 / DSM 15643 / BCRC 10681 / CIP 101130 / JCM 8532 / KCTC 2640 / LMG 13131 / VPI 4355) protein is Galactose/methyl galactoside import ATP-binding protein MglA.